We begin with the raw amino-acid sequence, 90 residues long: Small ribosomal subunit protein bS16 (90 aa).

Belongs to the bacterial ribosomal protein bS16 family.

The protein is Small ribosomal subunit protein bS16 of Brevibacillus brevis (strain 47 / JCM 6285 / NBRC 100599).